Here is a 202-residue protein sequence, read N- to C-terminus: dITP/XTP pyrophosphatase (202 aa).

10–15 contributes to the substrate binding site; sequence TGNAGK. Mg(2+) is bound by residues Asp46 and Asp75. Asp75 functions as the Proton acceptor in the catalytic mechanism. Substrate contacts are provided by residues Ser76, 160–163, Lys183, and 188–189; these read FGYD and HR.

Belongs to the HAM1 NTPase family. Homodimer. Mg(2+) is required as a cofactor.

It catalyses the reaction XTP + H2O = XMP + diphosphate + H(+). It carries out the reaction dITP + H2O = dIMP + diphosphate + H(+). The catalysed reaction is ITP + H2O = IMP + diphosphate + H(+). In terms of biological role, pyrophosphatase that catalyzes the hydrolysis of nucleoside triphosphates to their monophosphate derivatives, with a high preference for the non-canonical purine nucleotides XTP (xanthosine triphosphate), dITP (deoxyinosine triphosphate) and ITP. Seems to function as a house-cleaning enzyme that removes non-canonical purine nucleotides from the nucleotide pool, thus preventing their incorporation into DNA/RNA and avoiding chromosomal lesions. This is dITP/XTP pyrophosphatase from Idiomarina loihiensis (strain ATCC BAA-735 / DSM 15497 / L2-TR).